Here is a 1254-residue protein sequence, read N- to C-terminus: DNA polymerase gamma (1254 aa).

Basic and acidic residues predominate over residues 1125-1137 (RKKENRIDDENKK). 2 disordered regions span residues 1125–1145 (RKKE…KKNT) and 1202–1240 (YKKK…TNRN). Positions 1208-1217 (QARTASSSPI) are enriched in polar residues. The span at 1219–1231 (KTAKAVHSKKLPA) shows a compositional bias: basic residues.

The protein belongs to the DNA polymerase type-A family. Requires Mg(2+) as cofactor.

The protein localises to the mitochondrion. It catalyses the reaction DNA(n) + a 2'-deoxyribonucleoside 5'-triphosphate = DNA(n+1) + diphosphate. Functionally, involved in the replication of mitochondrial DNA. This is DNA polymerase gamma (MIP1) from Saccharomyces cerevisiae (strain ATCC 204508 / S288c) (Baker's yeast).